Here is a 295-residue protein sequence, read N- to C-terminus: Indole-3-glycerol phosphate synthase (295 aa).

This sequence belongs to the TrpC family.

It carries out the reaction 1-(2-carboxyphenylamino)-1-deoxy-D-ribulose 5-phosphate + H(+) = (1S,2R)-1-C-(indol-3-yl)glycerol 3-phosphate + CO2 + H2O. It functions in the pathway amino-acid biosynthesis; L-tryptophan biosynthesis; L-tryptophan from chorismate: step 4/5. This chain is Indole-3-glycerol phosphate synthase, found in Prochlorococcus marinus (strain MIT 9301).